The sequence spans 321 residues: Methionyl-tRNA formyltransferase (321 aa).

112 to 115 (GLLP) provides a ligand contact to (6S)-5,6,7,8-tetrahydrofolate.

The protein belongs to the Fmt family.

The catalysed reaction is L-methionyl-tRNA(fMet) + (6R)-10-formyltetrahydrofolate = N-formyl-L-methionyl-tRNA(fMet) + (6S)-5,6,7,8-tetrahydrofolate + H(+). In terms of biological role, attaches a formyl group to the free amino group of methionyl-tRNA(fMet). The formyl group appears to play a dual role in the initiator identity of N-formylmethionyl-tRNA by promoting its recognition by IF2 and preventing the misappropriation of this tRNA by the elongation apparatus. The protein is Methionyl-tRNA formyltransferase of Chlamydia caviae (strain ATCC VR-813 / DSM 19441 / 03DC25 / GPIC) (Chlamydophila caviae).